We begin with the raw amino-acid sequence, 147 residues long: uncharacterized protein (147 aa).

The Rhodanese domain occupies 50–140; the sequence is NQKKAIIVDT…WNSENLPTTF (91 aa).

This is an uncharacterized protein from Buchnera aphidicola subsp. Schizaphis graminum (strain Sg).